We begin with the raw amino-acid sequence, 134 residues long: Waprin-Phi1 (134 aa).

The first 23 residues, 1–23 (MTLRRGSCPLLLFSLVGLLTTCA), serve as a signal peptide directing secretion. WAP domains are found at residues 36-82 (VAEK…SCQI) and 83-133 (PDEK…TTAR). 8 cysteine pairs are disulfide-bonded: C43/C72, C55/C76, C59/C71, C65/C80, C90/C120, C103/C124, C107/C119, and C113/C129.

This sequence belongs to the venom waprin family. Expressed by the venom gland.

Its subcellular location is the secreted. Damages membranes of susceptible bacteria. Has no hemolytic activity. Not toxic to mice. Does not inhibit the proteinases elastase and cathepsin G. The polypeptide is Waprin-Phi1 (Philodryas olfersii (Green snake)).